Reading from the N-terminus, the 208-residue chain is MVSKRVESLLNQLRTQGIVDERVLEAIALVPREKFVDEAFEHKAWENTALPIGQGQTISQPYMVARMTELLTLTPESRVLEIGTGSGYQTAILAHLVHHVCSVERIKSLQWQARRRLKQLDLHNVSTRHGDGWQGWQARAPFDAIIVTAAPPEIPTALLAQLDDDGVLVLPVGEEHQFLKRIRRRGNEFIIDTVEAVRFVPLVKGELA.

Residue Ser59 is part of the active site.

Belongs to the methyltransferase superfamily. L-isoaspartyl/D-aspartyl protein methyltransferase family.

It is found in the cytoplasm. The enzyme catalyses [protein]-L-isoaspartate + S-adenosyl-L-methionine = [protein]-L-isoaspartate alpha-methyl ester + S-adenosyl-L-homocysteine. Catalyzes the methyl esterification of L-isoaspartyl residues in peptides and proteins that result from spontaneous decomposition of normal L-aspartyl and L-asparaginyl residues. It plays a role in the repair and/or degradation of damaged proteins. The polypeptide is Protein-L-isoaspartate O-methyltransferase (Klebsiella pneumoniae subsp. pneumoniae (strain ATCC 700721 / MGH 78578)).